The primary structure comprises 92 residues: Precursor of CEP12 (92 aa).

The N-terminal stretch at 1–30 is a signal peptide; the sequence is MVNRDNSIVALSFFMLFLLVLHLHFETTTA. Residues 31-70 constitute a propeptide that is removed on maturation; sequence ARKPVRVFGPPSSIEWSPPSPPKDDFEWFEINIYKNIEQT. Positions 70 to 92 are disordered; the sequence is TAFRPTGQGPSQGIGHKDPPGAP. Pro-74 and Pro-79 each carry hydroxyproline. A propeptide spanning residues 86–92 is cleaved from the precursor; it reads KDPPGAP.

Belongs to the C-terminally encoded plant signaling peptide (CEP) family. In terms of assembly, interacts with CEP receptors (e.g. CEPR1 and CEPR2). In terms of processing, the mature small signaling peptide is generated by proteolytic processing of the longer precursor.

The protein localises to the secreted. It localises to the extracellular space. It is found in the apoplast. Functionally, extracellular signaling peptide that may regulate primary root growth rate and systemic nitrogen (N)-demand signaling. The sequence is that of Precursor of CEP12 from Arabidopsis thaliana (Mouse-ear cress).